The following is a 322-amino-acid chain: Transaldolase (322 aa).

Lys-132 acts as the Schiff-base intermediate with substrate in catalysis.

It belongs to the transaldolase family. Type 1 subfamily. Homodimer.

Its subcellular location is the cytoplasm. The enzyme catalyses D-sedoheptulose 7-phosphate + D-glyceraldehyde 3-phosphate = D-erythrose 4-phosphate + beta-D-fructose 6-phosphate. Its pathway is carbohydrate degradation; pentose phosphate pathway; D-glyceraldehyde 3-phosphate and beta-D-fructose 6-phosphate from D-ribose 5-phosphate and D-xylulose 5-phosphate (non-oxidative stage): step 2/3. Functionally, transaldolase is important for the balance of metabolites in the pentose-phosphate pathway. In Protochlamydia amoebophila (strain UWE25), this protein is Transaldolase.